Consider the following 123-residue polypeptide: Large ribosomal subunit protein uL18 (123 aa).

Belongs to the universal ribosomal protein uL18 family. As to quaternary structure, part of the 50S ribosomal subunit; part of the 5S rRNA/L5/L18/L25 subcomplex. Contacts the 5S and 23S rRNAs.

This is one of the proteins that bind and probably mediate the attachment of the 5S RNA into the large ribosomal subunit, where it forms part of the central protuberance. This is Large ribosomal subunit protein uL18 from Protochlamydia amoebophila (strain UWE25).